Here is a 178-residue protein sequence, read N- to C-terminus: Translation initiation factor IF-3 (178 aa).

This sequence belongs to the IF-3 family. Monomer.

It localises to the cytoplasm. IF-3 binds to the 30S ribosomal subunit and shifts the equilibrium between 70S ribosomes and their 50S and 30S subunits in favor of the free subunits, thus enhancing the availability of 30S subunits on which protein synthesis initiation begins. The chain is Translation initiation factor IF-3 from Macrococcus caseolyticus (strain JCSC5402) (Macrococcoides caseolyticum).